A 360-amino-acid polypeptide reads, in one-letter code: Peptide chain release factor 1 (360 aa).

At glutamine 237 the chain carries N5-methylglutamine.

It belongs to the prokaryotic/mitochondrial release factor family. Post-translationally, methylated by PrmC. Methylation increases the termination efficiency of RF1.

It is found in the cytoplasm. Functionally, peptide chain release factor 1 directs the termination of translation in response to the peptide chain termination codons UAG and UAA. This chain is Peptide chain release factor 1, found in Stutzerimonas stutzeri (strain A1501) (Pseudomonas stutzeri).